The primary structure comprises 72 residues: Cytochrome b-c1 complex subunit 8-2, mitochondrial (72 aa).

Residues 1 to 41 (MGKQPVKLKAVVYALSPFQQKIMTGLWKDLPEKIHHKVSEN) are Mitochondrial matrix-facing. Residues 42-58 (WISTILLVAPVVGTYSY) traverse the membrane as a helical segment. The Mitochondrial intermembrane portion of the chain corresponds to 59–72 (AQYFKEQEKLEHRF).

The protein belongs to the UQCRQ/QCR8 family. In terms of assembly, component of the ubiquinol-cytochrome c oxidoreductase (cytochrome b-c1 complex, complex III, CIII), a multisubunit enzyme composed of 10 subunits. The complex is composed of 3 respiratory subunits cytochrome b (MT-CYB), cytochrome c1 (CYC1-1 or CYC1-2) and Rieske protein (UCR1-1 or UCR1-2), 2 core protein subunits MPPalpha1 (or MPPalpha2) and MPPB, and 5 low-molecular weight protein subunits QCR7-1 (or QCR7-2), UCRQ-1 (or UCRQ-2), QCR9, UCRY and probably QCR6-1 (or QCR6-2). The complex exists as an obligatory dimer and forms supercomplexes (SCs) in the inner mitochondrial membrane with NADH-ubiquinone oxidoreductase (complex I, CI), resulting in different assemblies (supercomplexes SCI(1)III(2) and SCI(2)III(4)).

The protein localises to the mitochondrion inner membrane. Functionally, component of the ubiquinol-cytochrome c oxidoreductase, a multisubunit transmembrane complex that is part of the mitochondrial electron transport chain which drives oxidative phosphorylation. The respiratory chain contains 3 multisubunit complexes succinate dehydrogenase (complex II, CII), ubiquinol-cytochrome c oxidoreductase (cytochrome b-c1 complex, complex III, CIII) and cytochrome c oxidase (complex IV, CIV), that cooperate to transfer electrons derived from NADH and succinate to molecular oxygen, creating an electrochemical gradient over the inner membrane that drives transmembrane transport and the ATP synthase. The cytochrome b-c1 complex catalyzes electron transfer from ubiquinol to cytochrome c, linking this redox reaction to translocation of protons across the mitochondrial inner membrane, with protons being carried across the membrane as hydrogens on the quinol. In the process called Q cycle, 2 protons are consumed from the matrix, 4 protons are released into the intermembrane space and 2 electrons are passed to cytochrome c. This Arabidopsis thaliana (Mouse-ear cress) protein is Cytochrome b-c1 complex subunit 8-2, mitochondrial (UCRQ-2).